A 704-amino-acid chain; its full sequence is Seven transmembrane domain-containing serine/threonine-protein kinase 2 (704 aa).

The Extracellular portion of the chain corresponds to 1–5 (MPSKE). A helical transmembrane segment spans residues 6 to 26 (FIIPLILLCFYSVNGFVAVIS). The Cytoplasmic segment spans residues 27-42 (SLVELFIHKASWNSIK). A helical transmembrane segment spans residues 43–63 (IFFYSLLILQCLCRCIIIGWG). The Extracellular segment spans residues 64 to 76 (MIETVQGGEFYSN). The chain crosses the membrane as a helical span at residues 77 to 97 (FPSLLFISYAGLVALQMIQFL). The Cytoplasmic segment spans residues 98–121 (PNDNQYLLLSEGKKNNHKVKVGTN). The chain crosses the membrane as a helical span at residues 122–142 (ILIFFNLFMYFGMFLLFGIAE). Topologically, residues 143–185 (KQVGNSTSFNHHGNHNSTTSTSTDEIPLVSTEVGELYLFGDKD) are extracellular. N-linked (GlcNAc...) asparagine glycosylation is found at Asn-147 and Asn-158. Residues 186–206 (PIYIVLDCFYFVCLLLLLIFH) form a helical membrane-spanning segment. The Cytoplasmic segment spans residues 207-224 (SYVGWKTYKRNKDLFGIK). A helical transmembrane segment spans residues 225–245 (LNVIHLILLICIFIRSLLVII). Residues 246–265 (DPSSPNNSILHIDTESWLIY) lie on the Extracellular side of the membrane. N-linked (GlcNAc...) asparagine glycosylation occurs at Asn-251. Residues 266-286 (IYTISYYVVGEIIPGMLLIVI) form a helical membrane-spanning segment. Topologically, residues 287–704 (EFLLPYHKRK…WSIEKDSSSK (418 aa)) are cytoplasmic. The 366-residue stretch at 317–682 (IAIHELLGMG…SLGVKFHLAN (366 aa)) folds into the Protein kinase domain. Residues 323–331 (LGMGGSGAM) and Lys-350 contribute to the ATP site. Asp-506 (proton acceptor) is an active-site residue.

The protein belongs to the protein kinase superfamily. Ser/Thr protein kinase family.

The protein resides in the membrane. It carries out the reaction L-seryl-[protein] + ATP = O-phospho-L-seryl-[protein] + ADP + H(+). The enzyme catalyses L-threonyl-[protein] + ATP = O-phospho-L-threonyl-[protein] + ADP + H(+). The protein is Seven transmembrane domain-containing serine/threonine-protein kinase 2 (7tmk2) of Dictyostelium discoideum (Social amoeba).